The sequence spans 205 residues: High frequency lysogenization protein HflD homolog (205 aa).

It belongs to the HflD family.

The protein localises to the cytoplasm. Its subcellular location is the cell inner membrane. This Shewanella sp. (strain ANA-3) protein is High frequency lysogenization protein HflD homolog.